The primary structure comprises 873 residues: Leucine--tRNA ligase (873 aa).

Residues 48–58 carry the 'HIGH' region motif; that stretch reads PYPSGKLHMGH. Positions 636–640 match the 'KMSKS' region motif; that stretch reads KMSKS. Lysine 639 contacts ATP.

The protein belongs to the class-I aminoacyl-tRNA synthetase family.

It is found in the cytoplasm. The catalysed reaction is tRNA(Leu) + L-leucine + ATP = L-leucyl-tRNA(Leu) + AMP + diphosphate. This chain is Leucine--tRNA ligase, found in Cupriavidus pinatubonensis (strain JMP 134 / LMG 1197) (Cupriavidus necator (strain JMP 134)).